A 300-amino-acid chain; its full sequence is UPF0282 protein TON_1363 (300 aa).

This sequence belongs to the UPF0282 family.

In Thermococcus onnurineus (strain NA1), this protein is UPF0282 protein TON_1363.